Consider the following 160-residue polypeptide: Cytochrome b6-f complex subunit 4 (160 aa).

Helical transmembrane passes span 36–56, 95–115, and 127–147; these read LLYI…GLSV, LLGV…PFIE, and PVAM…GIGA.

It belongs to the cytochrome b family. PetD subfamily. In terms of assembly, the 4 large subunits of the cytochrome b6-f complex are cytochrome b6, subunit IV (17 kDa polypeptide, petD), cytochrome f and the Rieske protein, while the 4 small subunits are petG, petL, petM and petN. The complex functions as a dimer.

The protein resides in the plastid. Its subcellular location is the chloroplast thylakoid membrane. In terms of biological role, component of the cytochrome b6-f complex, which mediates electron transfer between photosystem II (PSII) and photosystem I (PSI), cyclic electron flow around PSI, and state transitions. The polypeptide is Cytochrome b6-f complex subunit 4 (Guillardia theta (Cryptophyte)).